The primary structure comprises 116 residues: T-cell leukemia/lymphoma protein 1A (116 aa).

The protein belongs to the TCL1 family. Homodimer. Interacts with AKT1, AKT2 and AKT3 (via PH domain). Interacts with PNPT1; the interaction has no effect on PNPT1 exonuclease activity.

It is found in the cytoplasm. It localises to the nucleus. The protein localises to the microsome. Its subcellular location is the endoplasmic reticulum. Its function is as follows. Enhances the phosphorylation and activation of AKT1 and AKT2. Enhances cell proliferation, stabilizes mitochondrial membrane potential and promotes cell survival. This Mus musculus (Mouse) protein is T-cell leukemia/lymphoma protein 1A (Tcl1a).